The primary structure comprises 380 residues: Cytochrome b (380 aa).

A run of 4 helical transmembrane segments spans residues 34-54, 78-99, 114-134, and 179-199; these read FGSL…LLAT, WLIR…YLHI, WNTG…GYVL, and FFAL…IHLT. Heme b-binding residues include histidine 84 and histidine 98. 2 residues coordinate heme b: histidine 183 and histidine 197. Position 202 (histidine 202) interacts with a ubiquinone. 4 helical membrane-spanning segments follow: residues 227-247, 289-309, 321-341, and 348-368; these read LKDI…ALFS, LGGV…PFLH, ISQL…WIGS, and FIII…ALFP.

It belongs to the cytochrome b family. As to quaternary structure, the cytochrome bc1 complex contains 11 subunits: 3 respiratory subunits (MT-CYB, CYC1 and UQCRFS1), 2 core proteins (UQCRC1 and UQCRC2) and 6 low-molecular weight proteins (UQCRH/QCR6, UQCRB/QCR7, UQCRQ/QCR8, UQCR10/QCR9, UQCR11/QCR10 and a cleavage product of UQCRFS1). This cytochrome bc1 complex then forms a dimer. It depends on heme b as a cofactor.

The protein resides in the mitochondrion inner membrane. In terms of biological role, component of the ubiquinol-cytochrome c reductase complex (complex III or cytochrome b-c1 complex) that is part of the mitochondrial respiratory chain. The b-c1 complex mediates electron transfer from ubiquinol to cytochrome c. Contributes to the generation of a proton gradient across the mitochondrial membrane that is then used for ATP synthesis. This Buteo buteo (Eurasian buzzard) protein is Cytochrome b (MT-CYB).